The primary structure comprises 299 residues: ATP phosphoribosyltransferase (299 aa).

This sequence belongs to the ATP phosphoribosyltransferase family. Long subfamily. It depends on Mg(2+) as a cofactor.

It localises to the cytoplasm. It catalyses the reaction 1-(5-phospho-beta-D-ribosyl)-ATP + diphosphate = 5-phospho-alpha-D-ribose 1-diphosphate + ATP. It functions in the pathway amino-acid biosynthesis; L-histidine biosynthesis; L-histidine from 5-phospho-alpha-D-ribose 1-diphosphate: step 1/9. With respect to regulation, feedback inhibited by histidine. In terms of biological role, catalyzes the condensation of ATP and 5-phosphoribose 1-diphosphate to form N'-(5'-phosphoribosyl)-ATP (PR-ATP). Has a crucial role in the pathway because the rate of histidine biosynthesis seems to be controlled primarily by regulation of HisG enzymatic activity. The polypeptide is ATP phosphoribosyltransferase (Shewanella halifaxensis (strain HAW-EB4)).